Here is a 581-residue protein sequence, read N- to C-terminus: Probable hexosyltransferase MUCI70 (581 aa).

Topologically, residues 1–58 (MTGLGVRSSSYGSLEKTGLNGVVLPIQITTTTRTKPSKMQKDREGIVHWICKFAGRKK) are cytoplasmic. The chain crosses the membrane as a helical; Signal-anchor for type II membrane protein span at residues 59-79 (VGMLLLFLISAVVFLRVLYVG). The Lumenal portion of the chain corresponds to 80–581 (KGEDSQEGQG…NLPVRLPDSA (502 aa)). N-linked (GlcNAc...) asparagine glycans are attached at residues N96, N102, N119, N194, N224, N285, N382, N411, and N488. The segment at 514 to 581 (RFARQRPPVP…NLPVRLPDSA (68 aa)) is disordered. Residues 520-536 (PPVPNFPPPPPSPPPPV) show a composition bias toward pro residues. The span at 553-571 (PPRRRGRDRRSGQRGHRKA) shows a compositional bias: basic residues.

It belongs to the glycosyltransferase 8 family. In terms of tissue distribution, expressed in siliques and seeds.

Its subcellular location is the golgi apparatus membrane. The protein operates within glycan metabolism; pectin biosynthesis. Its function is as follows. Probable glycosyltransferase involved in pectin and/or xylans biosynthesis in cell walls. Together with IRX14, required for xylan and pectin synthesis in seed coat epidermal (SCE) cells. Collaboratively with GAUT11, essential for the accumulation of seed mucilage, a gelatinous wall rich in unbranched rhamnogalacturonan I (RG I), and for shaping the surface morphology of seeds. In Arabidopsis thaliana (Mouse-ear cress), this protein is Probable hexosyltransferase MUCI70.